A 211-amino-acid polypeptide reads, in one-letter code: Small ribosomal subunit protein eS1 (211 aa).

Residues asparagine 192–tyrosine 211 are disordered.

The protein belongs to the eukaryotic ribosomal protein eS1 family.

The chain is Small ribosomal subunit protein eS1 from Methanopyrus kandleri (strain AV19 / DSM 6324 / JCM 9639 / NBRC 100938).